A 665-amino-acid chain; its full sequence is Protein phosphatase 1 regulatory subunit 21 (665 aa).

Coiled coils occupy residues 1–84, 125–206, 426–477, and 586–627; these read MTDL…SESK, LEAQ…RKYQ, ESRE…EAQV, and KRLA…EDQL.

Component of the FERRY complex.

It localises to the early endosome. Its function is as follows. Component of the FERRY complex (Five-subunit Endosomal Rab5 and RNA/ribosome intermediary). The FERRY complex directly interacts with mRNAs and RAB5A, and functions as a RAB5A effector involved in the localization and the distribution of specific mRNAs most likely by mediating their endosomal transport. The complex recruits mRNAs and ribosomes to early endosomes through direct mRNA-interaction. Putative regulator of protein phosphatase 1 (PP1) activity. May play a role in the endosomal sorting process or in endosome maturation pathway. The chain is Protein phosphatase 1 regulatory subunit 21 (ppp1r21) from Danio rerio (Zebrafish).